A 425-amino-acid chain; its full sequence is Serine--tRNA ligase (425 aa).

Position 233-235 (233-235) interacts with L-serine; it reads TAE. 264 to 266 serves as a coordination point for ATP; sequence RAE. E287 lines the L-serine pocket. 351–354 is an ATP binding site; it reads EISS. An L-serine-binding site is contributed by S387.

The protein belongs to the class-II aminoacyl-tRNA synthetase family. Type-1 seryl-tRNA synthetase subfamily. Homodimer. The tRNA molecule binds across the dimer.

It is found in the cytoplasm. The enzyme catalyses tRNA(Ser) + L-serine + ATP = L-seryl-tRNA(Ser) + AMP + diphosphate + H(+). It catalyses the reaction tRNA(Sec) + L-serine + ATP = L-seryl-tRNA(Sec) + AMP + diphosphate + H(+). It functions in the pathway aminoacyl-tRNA biosynthesis; selenocysteinyl-tRNA(Sec) biosynthesis; L-seryl-tRNA(Sec) from L-serine and tRNA(Sec): step 1/1. Its function is as follows. Catalyzes the attachment of serine to tRNA(Ser). Is also able to aminoacylate tRNA(Sec) with serine, to form the misacylated tRNA L-seryl-tRNA(Sec), which will be further converted into selenocysteinyl-tRNA(Sec). The protein is Serine--tRNA ligase of Clostridium botulinum (strain Alaska E43 / Type E3).